Consider the following 391-residue polypeptide: Polyisoprenyl-teichoic acid--peptidoglycan teichoic acid transferase TagV (391 aa).

Over 1–23 (MAERVRVRVRKKKKSKRRKILKR) the chain is Cytoplasmic. Residues 24–44 (IMLLFALALLVVVGLGGYKLY) form a helical; Signal-anchor for type II membrane protein membrane-spanning segment. Residues 45-391 (KTINAADESY…TTNSTTDSSY (347 aa)) lie on the Extracellular side of the membrane. Residues 329–391 (DYTPDTSTGT…TTNSTTDSSY (63 aa)) are disordered. Residues 333–391 (DTSTGTSGTEDGTDSSSSSGSTGSTGTTTDGTTNGSSYSNDSSTSSNNSTTNSTTDSSY) are compositionally biased toward low complexity.

This sequence belongs to the LytR/CpsA/Psr (LCP) family.

It localises to the cell membrane. It functions in the pathway cell wall biogenesis. Functionally, may catalyze the final step in cell wall teichoic acid biosynthesis, the transfer of the anionic cell wall polymers (APs) from their lipid-linked precursor to the cell wall peptidoglycan (PG). The sequence is that of Polyisoprenyl-teichoic acid--peptidoglycan teichoic acid transferase TagV from Bacillus subtilis (strain 168).